We begin with the raw amino-acid sequence, 175 residues long: uncharacterized protein (175 aa).

An N-terminal signal peptide occupies residues 1 to 22; that stretch reads MNRIVGILISILMLACIGVTMA.

This is an uncharacterized protein from Archaeoglobus fulgidus (strain ATCC 49558 / DSM 4304 / JCM 9628 / NBRC 100126 / VC-16).